A 127-amino-acid chain; its full sequence is LIM domain-containing protein 2 (127 aa).

Methionine 1 carries the N-acetylmethionine modification. Residues methionine 1–valine 24 form a disordered region. The 61-residue stretch at glutamate 38–serine 98 folds into the LIM zinc-binding domain. 8 residues coordinate Zn(2+): cysteine 40, cysteine 43, histidine 61, cysteine 64, cysteine 67, cysteine 70, cysteine 88, and histidine 91.

Interacts with ILK.

The protein localises to the cytoplasm. It is found in the nucleus. Acts as an activator of the protein-kinase ILK, thereby regulating cell motility. The polypeptide is LIM domain-containing protein 2 (Homo sapiens (Human)).